A 518-amino-acid chain; its full sequence is Probable pectinesterase/pectinesterase inhibitor 16 (518 aa).

The first 33 residues, 1–33 (MASSSSISNHKIPNTLMFLVIVNFLYLIQTNSA), serve as a signal peptide directing secretion. The tract at residues 30 to 172 (TNSAVSISSN…TGLLTSSLDL (143 aa)) is pectinesterase inhibitor 16. 2 N-linked (GlcNAc...) asparagine glycosylation sites follow: Asn82 and Asn161. A pectinesterase 16 region spans residues 213 to 502 (DAVVAPDGSG…FTVASFIDGN (290 aa)). Residues Thr289 and Gln319 each coordinate substrate. Asp342 functions as the Proton donor; for pectinesterase activity in the catalytic mechanism. Asp363 (nucleophile; for pectinesterase activity) is an active-site residue. Substrate-binding residues include Arg422 and Trp424.

The protein in the N-terminal section; belongs to the PMEI family. In the C-terminal section; belongs to the pectinesterase family. As to expression, expressed in siliques and floral stems.

The protein resides in the secreted. The protein localises to the cell wall. It carries out the reaction [(1-&gt;4)-alpha-D-galacturonosyl methyl ester](n) + n H2O = [(1-&gt;4)-alpha-D-galacturonosyl](n) + n methanol + n H(+). The protein operates within glycan metabolism; pectin degradation; 2-dehydro-3-deoxy-D-gluconate from pectin: step 1/5. Its function is as follows. Acts in the modification of cell walls via demethylesterification of cell wall pectin. This Arabidopsis thaliana (Mouse-ear cress) protein is Probable pectinesterase/pectinesterase inhibitor 16 (PME16).